A 101-amino-acid chain; its full sequence is CYC02 protein (101 aa).

Residues 42–64 form a 1; approximate repeat; that stretch reads DAVCHHGCCRWFHHRCVRCCRSA. Residues 42–101 form a 2 X approximate repeats region; it reads DAVCHHGCCRWFHHRCVRCCRSAEEVSVSDTENNAAADAHCRHGCCRWFHGRCIRCCPSA. A 2; approximate repeat occupies 79-101; sequence DAHCRHGCCRWFHGRCIRCCPSA.

It belongs to the GRP family.

May be involved in the control of the cell cycle at the G1/S start transition. This Catharanthus roseus (Madagascar periwinkle) protein is CYC02 protein (CYC02).